A 727-amino-acid chain; its full sequence is Non-structural protein 4 (727 aa).

Disordered stretches follow at residues 1–38 (MNQS…PSEG) and 671–727 (GNSM…KLSK). Polar residues predominate over residues 17–38 (RTPSALSSNSETPGSMSSPSEG). Residues 712–727 (SRRKARKARAASKLSK) are compositionally biased toward basic residues.

The sequence is that of Non-structural protein 4 from Rice dwarf virus (isolate Fujian) (RDV).